The sequence spans 171 residues: S-ribosylhomocysteine lyase (171 aa).

3 residues coordinate Fe cation: His-54, His-58, and Cys-128.

This sequence belongs to the LuxS family. As to quaternary structure, homodimer. Requires Fe cation as cofactor.

The enzyme catalyses S-(5-deoxy-D-ribos-5-yl)-L-homocysteine = (S)-4,5-dihydroxypentane-2,3-dione + L-homocysteine. In terms of biological role, involved in the synthesis of autoinducer 2 (AI-2) which is secreted by bacteria and is used to communicate both the cell density and the metabolic potential of the environment. The regulation of gene expression in response to changes in cell density is called quorum sensing. Catalyzes the transformation of S-ribosylhomocysteine (RHC) to homocysteine (HC) and 4,5-dihydroxy-2,3-pentadione (DPD). The polypeptide is S-ribosylhomocysteine lyase (Campylobacter curvus (strain 525.92)).